The primary structure comprises 207 residues: Vascular endothelial growth factor B (207 aa).

The N-terminal stretch at 1–21 (MSPLLRRLLLVALLQLARTQA) is a signal peptide. Cystine bridges form between cysteine 47–cysteine 89, cysteine 78–cysteine 122, and cysteine 82–cysteine 124. Residues 129 to 139 (KESAVKPDRVA) are compositionally biased toward basic and acidic residues. Residues 129-178 (KESAVKPDRVAIPHHRPQPRSVPGWDSTPGASSPADIIHPTPAPGSSARL) are disordered.

The protein belongs to the PDGF/VEGF growth factor family. In terms of assembly, homodimer; disulfide-linked. Can also form heterodimer with VEGF. In terms of processing, VEGF-B186 is O-glycosylated. Abundantly expressed in heart, brain, kidney and skeletal muscle.

The protein localises to the secreted. Its function is as follows. Growth factor for endothelial cells. VEGF-B167 binds heparin and neuropilin-1 whereas the binding to neuropilin-1 of VEGF-B186 is regulated by proteolysis. VEGF-B seems to be required for normal heart function in adult but is not required for proper development of the cardiovascular system either during development or for angiogenesis in adults. The chain is Vascular endothelial growth factor B (Vegfb) from Mus musculus (Mouse).